We begin with the raw amino-acid sequence, 251 residues long: tRNA pseudouridine synthase A (251 aa).

Catalysis depends on Asp-52, which acts as the Nucleophile. Substrate is bound at residue Tyr-113.

The protein belongs to the tRNA pseudouridine synthase TruA family. In terms of assembly, homodimer.

The catalysed reaction is uridine(38/39/40) in tRNA = pseudouridine(38/39/40) in tRNA. Functionally, formation of pseudouridine at positions 38, 39 and 40 in the anticodon stem and loop of transfer RNAs. The sequence is that of tRNA pseudouridine synthase A from Brucella abortus (strain 2308).